A 362-amino-acid chain; its full sequence is Homoisocitrate dehydrogenase (362 aa).

79 to 81 (VQS) is an NADH binding site. S81 serves as a coordination point for (2R,3S)-homoisocitrate. Phosphoserine is present on residues S81 and S91. Residues R97, R107, R126, Y133, K196, and N198 each coordinate (2R,3S)-homoisocitrate. N198 is an NADH binding site. Mg(2+)-binding residues include D232, D256, and D260. NADH-binding positions include 289-293 (GSAPD) and N301.

This sequence belongs to the isocitrate and isopropylmalate dehydrogenases family. Mg(2+) is required as a cofactor.

The protein localises to the cytoplasm. The catalysed reaction is (2R,3S)-homoisocitrate + NAD(+) = 2-oxoadipate + CO2 + NADH. The protein operates within amino-acid biosynthesis; L-lysine biosynthesis via AAA pathway; L-alpha-aminoadipate from 2-oxoglutarate: step 4/5. The chain is Homoisocitrate dehydrogenase (lys12) from Schizosaccharomyces pombe (strain 972 / ATCC 24843) (Fission yeast).